We begin with the raw amino-acid sequence, 132 residues long: D-ribose pyranase (132 aa).

The Proton donor role is filled by histidine 20. Substrate is bound by residues aspartate 28, histidine 99, and 121-123 (YSN).

Belongs to the RbsD / FucU family. RbsD subfamily. As to quaternary structure, homodecamer.

It is found in the cytoplasm. The catalysed reaction is beta-D-ribopyranose = beta-D-ribofuranose. Its pathway is carbohydrate metabolism; D-ribose degradation; D-ribose 5-phosphate from beta-D-ribopyranose: step 1/2. Its function is as follows. Catalyzes the interconversion of beta-pyran and beta-furan forms of D-ribose. In Pseudomonas putida (strain ATCC 47054 / DSM 6125 / CFBP 8728 / NCIMB 11950 / KT2440), this protein is D-ribose pyranase.